Reading from the N-terminus, the 336-residue chain is uncharacterized protein (336 aa).

Residues Lys-297–Met-316 are compositionally biased toward basic and acidic residues. The segment at Lys-297–His-336 is disordered.

This is an uncharacterized protein from Invertebrate iridescent virus 6 (IIV-6).